The following is a 539-amino-acid chain: Cytochrome P450 monooxygenase pvhE (539 aa).

The helical transmembrane segment at 15 to 31 (VAFCSLVILCILFKVLT) threads the bilayer. Asn-379 is a glycosylation site (N-linked (GlcNAc...) asparagine). A heme-binding site is contributed by Cys-473.

Belongs to the cytochrome P450 family. Heme is required as a cofactor.

The protein localises to the membrane. The protein operates within secondary metabolite biosynthesis. Cytochrome P450 monooxygenase; part of the gene cluster that mediates the biosynthesis of varicidin A, an antifungal natural product containing a cis-octahydrodecalin core. The PKS module of pvhA together with the enoylreductase pvhC catalyze the formation of the polyketide unit which is then conjugated to L-isoleucine by the condensation domain of the NRPS module. Activity of the Dieckmann cyclase domain (RED) of pvhA results in release of an acyclic tetramate. The cytochrome P450 monooxygenase pvhE then catalyzes the oxidation of the C21 methyl group to a to carboxylate group. The methyltransferase pvhD then further methylates the pvhE product. The Diels-Alderase pvhB is able to catalyze Diels-Alder cycloaddition using both pvhE and pvhD products as substrates to form the decalin ring, yielding varicidin B and A, respectively. The protein is Cytochrome P450 monooxygenase pvhE of Talaromyces variabilis (Penicillium variabile).